A 46-amino-acid polypeptide reads, in one-letter code: Large ribosomal subunit protein bL34 (46 aa).

The tract at residues 25–46 (TASGRQVLRRRRAKGRYRLAVS) is disordered. Basic residues predominate over residues 31-46 (VLRRRRAKGRYRLAVS).

Belongs to the bacterial ribosomal protein bL34 family.

This is Large ribosomal subunit protein bL34 from Synechococcus sp. (strain JA-3-3Ab) (Cyanobacteria bacterium Yellowstone A-Prime).